The chain runs to 478 residues: MTHSTQQLSPEGVAEGKRGRLIRELVNRDKTPLIILIMAAVVGVVTGLLGVAFDRGVDWVQQQRLLALANVADSALLVWPLAFIMSALLAMMGYFLVSRFAPEAGGSGIPEIEGAMEEMRPVRWWRVIPVKFIGGLGTLGAGMVLGREGPMVQMGGNSGRMIVDIFRLRSPEARHSLLATGAAAGLSAAFNAPLAGILFVIEEMRSQFRYSLVSIKAVFIGVITSTIVYRYFNGERAIIEVGKLSDAPLNTLWLYLLLGIIFGAVGVIFNALIFRTQDMFVRFHGGDWRKLVLIGGLLGGMCGLLALLHGNAVGGGFALIPIAAAGNFSIGMLLFIFIARVITTLLCFGSGAPGGIFAPMLALGTILGTAFGLSCAHFFPQYGIEAGTFAIAGMGALFAASVRAPLTGIVLVLEMTDNYQLILPMIVTCLGATLIAQFMGGKPLYSAILARTLAKQEQARATVIAQEPAVENTPQTGR.

The Cytoplasmic portion of the chain corresponds to 1–32; it reads MTHSTQQLSPEGVAEGKRGRLIRELVNRDKTP. A helical transmembrane segment spans residues 33 to 69; sequence LIILIMAAVVGVVTGLLGVAFDRGVDWVQQQRLLALA. Residues 70 to 76 lie on the Periplasmic side of the membrane; sequence NVADSAL. The chain crosses the membrane as a helical span at residues 77 to 100; it reads LVWPLAFIMSALLAMMGYFLVSRF. The Selectivity filter part_1 signature appears at 106 to 110; it reads GSGIP. Residue Ser-107 participates in chloride binding. The segment at residues 109–116 is an intramembrane region (helical); the sequence is IPEIEGAM. Over 117-123 the chain is Cytoplasmic; it reads EEMRPVR. The next 2 helical transmembrane spans lie at 124–141 and 148–166; these read WWRV…TLGA and EGPM…VDIF. A Selectivity filter part_2 motif is present at residues 146–150; the sequence is GREGP. The Cytoplasmic segment spans residues 167–176; the sequence is RLRSPEARHS. 2 consecutive intramembrane regions (helical) follow at residues 177 to 189 and 193 to 201; these read LLAT…LSAA and PLAGILFVI. The Cytoplasmic portion of the chain corresponds to 202-214; that stretch reads EEMRSQFRYSLVS. The chain crosses the membrane as a helical span at residues 215–232; it reads IKAVFIGVITSTIVYRYF. Over 233 to 252 the chain is Periplasmic; that stretch reads NGERAIIEVGKLSDAPLNTL. Residues 253-281 form a helical membrane-spanning segment; the sequence is WLYLLLGIIFGAVGVIFNALIFRTQDMFV. The Cytoplasmic segment spans residues 282 to 287; the sequence is RFHGGD. A helical membrane pass occupies residues 288-309; sequence WRKLVLIGGLLGGMCGLLALLH. Residues 310 to 329 lie on the Periplasmic side of the membrane; sequence GNAVGGGFALIPIAAAGNFS. The next 2 helical transmembrane spans lie at 330 to 349 and 355 to 376; these read IGML…LCFG and GIFA…LSCA. A Selectivity filter part_3 motif is present at residues 355 to 359; that stretch reads GIFAP. 2 residues coordinate chloride: Ile-356 and Phe-357. Residues 377-386 lie on the Periplasmic side of the membrane; that stretch reads HFFPQYGIEA. The segment at residues 387-401 is an intramembrane region (helical); that stretch reads GTFAIAGMGALFAAS. Positions 402–404 form an intramembrane region, note=Loop between two helices; that stretch reads VRA. The helical intramembrane region spans 405–416; it reads PLTGIVLVLEMT. Positions 417–421 form an intramembrane region, note=Loop between two helices; that stretch reads DNYQL. The helical transmembrane segment at 422–438 threads the bilayer; it reads ILPMIVTCLGATLIAQF. Residues 439 to 478 lie on the Cytoplasmic side of the membrane; the sequence is MGGKPLYSAILARTLAKQEQARATVIAQEPAVENTPQTGR. Tyr-445 provides a ligand contact to chloride.

Belongs to the chloride channel (TC 2.A.49) family. ClcA subfamily. In terms of assembly, homodimer.

The protein resides in the cell inner membrane. It catalyses the reaction 2 chloride(in) + H(+)(out) = 2 chloride(out) + H(+)(in). In terms of biological role, proton-coupled chloride transporter. Functions as antiport system and exchanges two chloride ions for 1 proton. Probably acts as an electrical shunt for an outwardly-directed proton pump that is linked to amino acid decarboxylation, as part of the extreme acid resistance (XAR) response. This is H(+)/Cl(-) exchange transporter ClcA from Yersinia pseudotuberculosis serotype IB (strain PB1/+).